Consider the following 378-residue polypeptide: Copper-containing nitrite reductase (378 aa).

The tat-type signal signal peptide spans 1 to 38 (MTEQLQMTRRTMLAGAALAGAVAPLLHTAQAHAAGAAA). Plastocyanin-like domains are found at residues 39-213 (AAGA…YDKI) and 214-378 (YYVG…PASM). Cu cation-binding residues include His-133, His-138, His-173, Cys-174, His-183, Met-188, and His-344.

The protein belongs to the multicopper oxidase family. Homotrimer. Requires Cu(+) as cofactor. The cofactor is Cu(2+). It depends on FAD as a cofactor. Post-translationally, predicted to be exported by the Tat system. The position of the signal peptide cleavage has been experimentally proven.

Its subcellular location is the periplasm. It carries out the reaction nitric oxide + Fe(III)-[cytochrome c] + H2O = Fe(II)-[cytochrome c] + nitrite + 2 H(+). It participates in nitrogen metabolism; nitrate reduction (denitrification); dinitrogen from nitrate: step 2/4. This is Copper-containing nitrite reductase (nirK) from Achromobacter cycloclastes.